The primary structure comprises 474 residues: tRNA-2-methylthio-N(6)-dimethylallyladenosine synthase (474 aa).

Residues lysine 3–arginine 120 enclose the MTTase N-terminal domain. Cysteine 12, cysteine 49, cysteine 83, cysteine 157, cysteine 161, and cysteine 164 together coordinate [4Fe-4S] cluster. The 233-residue stretch at arginine 143–arginine 375 folds into the Radical SAM core domain. In terms of domain architecture, TRAM spans arginine 378–arginine 441.

This sequence belongs to the methylthiotransferase family. MiaB subfamily. In terms of assembly, monomer. It depends on [4Fe-4S] cluster as a cofactor.

The protein resides in the cytoplasm. It carries out the reaction N(6)-dimethylallyladenosine(37) in tRNA + (sulfur carrier)-SH + AH2 + 2 S-adenosyl-L-methionine = 2-methylsulfanyl-N(6)-dimethylallyladenosine(37) in tRNA + (sulfur carrier)-H + 5'-deoxyadenosine + L-methionine + A + S-adenosyl-L-homocysteine + 2 H(+). Its function is as follows. Catalyzes the methylthiolation of N6-(dimethylallyl)adenosine (i(6)A), leading to the formation of 2-methylthio-N6-(dimethylallyl)adenosine (ms(2)i(6)A) at position 37 in tRNAs that read codons beginning with uridine. This chain is tRNA-2-methylthio-N(6)-dimethylallyladenosine synthase, found in Shewanella frigidimarina (strain NCIMB 400).